An 80-amino-acid polypeptide reads, in one-letter code: ATP synthase subunit c (80 aa).

A run of 2 helical transmembrane segments spans residues 11-31 (IAAA…IGIL) and 53-73 (FFIV…LGLY).

It belongs to the ATPase C chain family. F-type ATPases have 2 components, F(1) - the catalytic core - and F(0) - the membrane proton channel. F(1) has five subunits: alpha(3), beta(3), gamma(1), delta(1), epsilon(1). F(0) has three main subunits: a(1), b(2) and c(10-14). The alpha and beta chains form an alternating ring which encloses part of the gamma chain. F(1) is attached to F(0) by a central stalk formed by the gamma and epsilon chains, while a peripheral stalk is formed by the delta and b chains.

It localises to the cell inner membrane. Functionally, f(1)F(0) ATP synthase produces ATP from ADP in the presence of a proton or sodium gradient. F-type ATPases consist of two structural domains, F(1) containing the extramembraneous catalytic core and F(0) containing the membrane proton channel, linked together by a central stalk and a peripheral stalk. During catalysis, ATP synthesis in the catalytic domain of F(1) is coupled via a rotary mechanism of the central stalk subunits to proton translocation. Key component of the F(0) channel; it plays a direct role in translocation across the membrane. A homomeric c-ring of between 10-14 subunits forms the central stalk rotor element with the F(1) delta and epsilon subunits. The sequence is that of ATP synthase subunit c from Aeromonas hydrophila subsp. hydrophila (strain ATCC 7966 / DSM 30187 / BCRC 13018 / CCUG 14551 / JCM 1027 / KCTC 2358 / NCIMB 9240 / NCTC 8049).